A 233-amino-acid polypeptide reads, in one-letter code: Ubiquinone biosynthesis O-methyltransferase (233 aa).

Positions 37, 56, 77, and 121 each coordinate S-adenosyl-L-methionine.

It belongs to the methyltransferase superfamily. UbiG/COQ3 family.

It carries out the reaction a 3-demethylubiquinol + S-adenosyl-L-methionine = a ubiquinol + S-adenosyl-L-homocysteine + H(+). The enzyme catalyses a 3-(all-trans-polyprenyl)benzene-1,2-diol + S-adenosyl-L-methionine = a 2-methoxy-6-(all-trans-polyprenyl)phenol + S-adenosyl-L-homocysteine + H(+). It functions in the pathway cofactor biosynthesis; ubiquinone biosynthesis. In terms of biological role, O-methyltransferase that catalyzes the 2 O-methylation steps in the ubiquinone biosynthetic pathway. The protein is Ubiquinone biosynthesis O-methyltransferase of Azoarcus sp. (strain BH72).